Reading from the N-terminus, the 156-residue chain is MFSAWDRRERPPEEGAAAGLQGFGVDKTFLSSLKGILLETELALTFIIFICFTASISAYMAAALLEFLITLAFLFLCATQYYQRFDRLNWPCLDFLRCLSAIVIFLVVSFAAVTSREGAAIAAFVFGIILVSVFAYDAFKIYRTELMPSTTEGDQQ.

The region spanning 29-146 (FLSSLKGILL…DAFKIYRTEL (118 aa)) is the MARVEL domain. 4 helical membrane-spanning segments follow: residues 35-55 (GILLETELALTFIIFICFTAS), 56-76 (ISAYMAAALLEFLITLAFLFL), 93-113 (LDFLRCLSAIVIFLVVSFAAV), and 119-139 (AAIAAFVFGIILVSVFAYDAF).

Belongs to the chemokine-like factor family.

The protein resides in the membrane. The polypeptide is CKLF-like MARVEL transmembrane domain-containing protein 5 (Cmtm5) (Mus musculus (Mouse)).